The primary structure comprises 385 residues: Branched-chain-amino-acid aminotransferase, cytosolic (385 aa).

Lysine 221 is modified (N6-(pyridoxal phosphate)lysine).

The protein belongs to the class-IV pyridoxal-phosphate-dependent aminotransferase family. Homodimer. Pyridoxal 5'-phosphate is required as a cofactor. Expressed in muscles.

Its subcellular location is the cytoplasm. The enzyme catalyses L-leucine + 2-oxoglutarate = 4-methyl-2-oxopentanoate + L-glutamate. The catalysed reaction is L-isoleucine + 2-oxoglutarate = (S)-3-methyl-2-oxopentanoate + L-glutamate. It catalyses the reaction L-valine + 2-oxoglutarate = 3-methyl-2-oxobutanoate + L-glutamate. Catalyzes the first reaction in the catabolism of the essential branched chain amino acids leucine, isoleucine, and valine. The chain is Branched-chain-amino-acid aminotransferase, cytosolic (BCAT1) from Ovis aries (Sheep).